Reading from the N-terminus, the 281-residue chain is Shikimate dehydrogenase (NADP(+)) (281 aa).

Shikimate-binding positions include 15–17 (SKS) and Thr-62. Lys-66 functions as the Proton acceptor in the catalytic mechanism. Shikimate-binding residues include Asn-87 and Asp-102. NADP(+) is bound by residues 127–131 (GAGGS), 151–156 (NRTPER), and Leu-217. Residue Tyr-219 participates in shikimate binding. Residue Gly-241 participates in NADP(+) binding.

Belongs to the shikimate dehydrogenase family. As to quaternary structure, homodimer.

It catalyses the reaction shikimate + NADP(+) = 3-dehydroshikimate + NADPH + H(+). It functions in the pathway metabolic intermediate biosynthesis; chorismate biosynthesis; chorismate from D-erythrose 4-phosphate and phosphoenolpyruvate: step 4/7. Functionally, involved in the biosynthesis of the chorismate, which leads to the biosynthesis of aromatic amino acids. Catalyzes the reversible NADPH linked reduction of 3-dehydroshikimate (DHSA) to yield shikimate (SA). The chain is Shikimate dehydrogenase (NADP(+)) from Stenotrophomonas maltophilia (strain K279a).